Reading from the N-terminus, the 95-residue chain is Cobalt transport protein CbiN (95 aa).

Transmembrane regions (helical) follow at residues Ile7–Gly27 and Leu67–Tyr87.

Belongs to the CbiN family. In terms of assembly, forms an energy-coupling factor (ECF) transporter complex composed of an ATP-binding protein (A component, CbiO), a transmembrane protein (T component, CbiQ) and 2 possible substrate-capture proteins (S components, CbiM and CbiN) of unknown stoichimetry.

The protein localises to the cell membrane. Its pathway is cofactor biosynthesis; adenosylcobalamin biosynthesis. Functionally, part of the energy-coupling factor (ECF) transporter complex CbiMNOQ involved in cobalt import. In Methanothermobacter marburgensis (strain ATCC BAA-927 / DSM 2133 / JCM 14651 / NBRC 100331 / OCM 82 / Marburg) (Methanobacterium thermoautotrophicum), this protein is Cobalt transport protein CbiN.